Here is a 1009-residue protein sequence, read N- to C-terminus: DNA polymerase catalytic subunit (1009 aa).

The protein belongs to the DNA polymerase type-B family.

The protein resides in the host nucleus. The catalysed reaction is DNA(n) + a 2'-deoxyribonucleoside 5'-triphosphate = DNA(n+1) + diphosphate. The chain is DNA polymerase catalytic subunit (9) from Saimiri sciureus (Common squirrel monkey).